We begin with the raw amino-acid sequence, 559 residues long: Oxygen-dependent choline dehydrogenase (559 aa).

4-33 (DYIIIGAGSAGNVLAARLTEESDVSVLLLE) is an FAD binding site. The disordered stretch occupies residues 182-202 (EGFGPMDRTVTPKGRRASTAR). Residue His471 is the Proton acceptor of the active site.

It belongs to the GMC oxidoreductase family. Requires FAD as cofactor.

The catalysed reaction is choline + A = betaine aldehyde + AH2. It carries out the reaction betaine aldehyde + NAD(+) + H2O = glycine betaine + NADH + 2 H(+). It participates in amine and polyamine biosynthesis; betaine biosynthesis via choline pathway; betaine aldehyde from choline (cytochrome c reductase route): step 1/1. Involved in the biosynthesis of the osmoprotectant glycine betaine. Catalyzes the oxidation of choline to betaine aldehyde and betaine aldehyde to glycine betaine at the same rate. This Pectobacterium atrosepticum (strain SCRI 1043 / ATCC BAA-672) (Erwinia carotovora subsp. atroseptica) protein is Oxygen-dependent choline dehydrogenase.